The primary structure comprises 338 residues: Phosphate transport system permease protein PstC 1 (338 aa).

8 helical membrane-spanning segments follow: residues 19 to 39 (GGIG…VLVI), 93 to 113 (TSAI…LVIV), 123 to 143 (AVGI…GLWG), 144 to 164 (AMTF…HNAP), 181 to 201 (GMLV…ATTT), 232 to 252 (LPWV…RALG), 254 to 274 (TMAV…NIYA), and 295 to 315 (TNFA…ITLL). The ABC transmembrane type-1 domain occupies 87-320 (IVGTLATSAI…VITLLTNVAA (234 aa)).

Belongs to the binding-protein-dependent transport system permease family. CysTW subfamily.

The protein resides in the cell membrane. Part of the binding-protein-dependent transport system for phosphate; probably responsible for the translocation of the substrate across the membrane. This chain is Phosphate transport system permease protein PstC 1 (pstC1), found in Mycobacterium bovis (strain ATCC BAA-935 / AF2122/97).